The primary structure comprises 128 residues: MWKERAMEEMKKAGLRLTPQRLKLIEVIEKIGGRHPTLKEVYEEVVKEFPTMSFSTLYSNLLIFRGLGLLDFFTLEGETRVEVNCEPHFNVIEREEIRDFVDEELIGEIERRLGRNVKVVNVFMEDRD.

Belongs to the Fur family.

This chain is Ferric uptake regulation protein homolog, found in Archaeoglobus fulgidus (strain ATCC 49558 / DSM 4304 / JCM 9628 / NBRC 100126 / VC-16).